The primary structure comprises 217 residues: Superoxide dismutase [Mn], mitochondrial (217 aa).

Residues 1–17 constitute a mitochondrion transit peptide; that stretch reads MFVARKISPNCKPGVRG. Histidine 43, histidine 91, aspartate 175, and histidine 179 together coordinate Mn(2+).

The protein belongs to the iron/manganese superoxide dismutase family. Homotetramer. Requires Mn(2+) as cofactor.

Its subcellular location is the mitochondrion matrix. It carries out the reaction 2 superoxide + 2 H(+) = H2O2 + O2. In terms of biological role, destroys superoxide anion radicals which are normally produced within the cells and which are toxic to biological systems. This Drosophila melanogaster (Fruit fly) protein is Superoxide dismutase [Mn], mitochondrial (Sod2).